The sequence spans 142 residues: Hemoglobin subunit alpha-A (142 aa).

Positions 2–142 constitute a Globin domain; the sequence is VLSGSDKTNV…VGNVLTAKYR (141 aa). O2 is bound at residue His-59. Heme b is bound at residue His-88.

Belongs to the globin family. As to quaternary structure, heterotetramer of two alpha chains and two beta chains. In terms of tissue distribution, red blood cells.

Involved in oxygen transport from the lung to the various peripheral tissues. In Ara ararauna (Blue-and-yellow macaw), this protein is Hemoglobin subunit alpha-A (HBAA).